A 424-amino-acid polypeptide reads, in one-letter code: UPF0761 membrane protein Smlt0865 (424 aa).

6 helical membrane-spanning segments follow: residues 48 to 68 (VFAL…FPVF), 101 to 121 (SAGQ…LITL), 144 to 164 (FLVY…SLAV), 181 to 201 (WLAE…CITL), 216 to 236 (AVPG…GIGA), and 251 to 271 (VAFV…VLLG).

It belongs to the UPF0761 family.

It localises to the cell inner membrane. This is UPF0761 membrane protein Smlt0865 from Stenotrophomonas maltophilia (strain K279a).